Consider the following 349-residue polypeptide: ATP synthase subunit a-2 (349 aa).

Positions 1-97 are excised as a propeptide; it reads MERLTRLNHF…SNYMKLMEIP (97 aa). 7 helical membrane-spanning segments follow: residues 118–138, 184–204, 213–233, 240–260, 280–300, 303–323, and 326–346; these read FSFT…LLLI, FFPC…QGMI, HFLI…IVGF, FFSF…LVLL, MMAG…MLCM, IFYF…TGLE, and VAIL…NDAI.

It belongs to the ATPase A chain family. As to quaternary structure, F-type ATPases have 2 components, CF(1) - the catalytic core - and CF(0) - the membrane proton channel. CF(1) has five subunits: alpha(3), beta(3), gamma(1), delta(1), epsilon(1). CF(0) has three main subunits: a, b and c.

It localises to the mitochondrion inner membrane. Its function is as follows. Mitochondrial membrane ATP synthase (F(1)F(0) ATP synthase or Complex V) produces ATP from ADP in the presence of a proton gradient across the membrane which is generated by electron transport complexes of the respiratory chain. F-type ATPases consist of two structural domains, F(1) - containing the extramembraneous catalytic core and F(0) - containing the membrane proton channel, linked together by a central stalk and a peripheral stalk. During catalysis, ATP synthesis in the catalytic domain of F(1) is coupled via a rotary mechanism of the central stalk subunits to proton translocation. Key component of the proton channel; it may play a direct role in the translocation of protons across the membrane. This is ATP synthase subunit a-2 (ATP6-2) from Arabidopsis thaliana (Mouse-ear cress).